Consider the following 334-residue polypeptide: Ferredoxin--NADP reductase (334 aa).

FAD contacts are provided by aspartate 32, glutamine 40, tyrosine 45, valine 85, phenylalanine 120, aspartate 287, and threonine 327.

Belongs to the ferredoxin--NADP reductase type 2 family. As to quaternary structure, homodimer. The cofactor is FAD.

The catalysed reaction is 2 reduced [2Fe-2S]-[ferredoxin] + NADP(+) + H(+) = 2 oxidized [2Fe-2S]-[ferredoxin] + NADPH. This is Ferredoxin--NADP reductase from Wolbachia pipientis subsp. Culex pipiens (strain wPip).